We begin with the raw amino-acid sequence, 273 residues long: Hydroxynaphthalene reductase arp2 (273 aa).

NADP(+) is bound by residues Ile24, Asp70, Asn97, and Arg130. Active-site proton donor residues include Ser146 and Ser147. NADP(+)-binding residues include Tyr160, Lys164, Val193, and Ser195. Tyr160 acts as the Proton acceptor in catalysis. The Lowers pKa of active site Tyr role is filled by Lys164.

The protein belongs to the short-chain dehydrogenases/reductases (SDR) family.

The protein localises to the endosome. The protein operates within pigment biosynthesis; melanin biosynthesis. With respect to regulation, tricyclazole and pyroquilon inhibit arp2 hydroxynaphtalene reductase activity. Its function is as follows. Hydroxynaphthalene reductase; part of the gene cluster that mediates the biosynthesis of dihydroxynaphthalene (DHN)-melanin, a bluish-green pigment and a structural component of the conidial wall. The first step of the pathway is the production of the heptaketide naphtopyrone YWA1 by the polyketide synthase alb1 though condensation of acetyl-CoA with malonyl-CoA. The naphtopyrone YWA1 is then converted to the pentaketide 1,3,6,8-tetrahydroxynaphthalene (1,3,6,8-THN) by the heptaketide hydrolyase ayg1 though chain-length shortening. 1,3,6,8-THN is substrate of the hydroxynaphthalene reductase arp2 to yield scytalone. The scytalone dehydratase arp1 then reduces scytalone to 1,3,8-THN. 1,3,8-THN is also substrate of the hydroxynaphthalene reductase arp2 to yield vermelone. Vermelone is further converted by the multicopper oxidase abr1 to 1,8-DHN. Finally the laccase abr2 transforms 1,8-DHN to DHN-melanin. DHN-melanin biosynthesis appears to be initiated in endosomes where early enzymes (abl1, ayg1, arp1 and arp2) localize, with exocytosis leading to melanin deposition on the cell surface where late enzymes (abr1 and abr2) localize. DHN-melanin is an important structural component of the outer cell wall and is required for the presence of conidial surface hydrophobins. DHN-melanin also plays a crucial role in fungal virulence, including a protective role against the host's immune defenses. DHN-melanin also protects conidia against amoeba predation. This chain is Hydroxynaphthalene reductase arp2, found in Aspergillus fumigatus (strain ATCC MYA-4609 / CBS 101355 / FGSC A1100 / Af293) (Neosartorya fumigata).